The sequence spans 357 residues: 3-isopropylmalate dehydrogenase (357 aa).

76 to 89 is an NAD(+) binding site; that stretch reads GYQWESLDISVRPE. Substrate is bound by residues Arg96, Arg106, Arg134, and Asp224. Mg(2+)-binding residues include Asp224, Asp248, and Asp252. 282 to 294 serves as a coordination point for NAD(+); the sequence is GSAPDIAGQNIAN.

It belongs to the isocitrate and isopropylmalate dehydrogenases family. LeuB type 1 subfamily. Homodimer. Mg(2+) serves as cofactor. Mn(2+) is required as a cofactor.

It is found in the cytoplasm. The catalysed reaction is (2R,3S)-3-isopropylmalate + NAD(+) = 4-methyl-2-oxopentanoate + CO2 + NADH. It participates in amino-acid biosynthesis; L-leucine biosynthesis; L-leucine from 3-methyl-2-oxobutanoate: step 3/4. In terms of biological role, catalyzes the oxidation of 3-carboxy-2-hydroxy-4-methylpentanoate (3-isopropylmalate) to 3-carboxy-4-methyl-2-oxopentanoate. The product decarboxylates to 4-methyl-2 oxopentanoate. In Hydrogenovibrio crunogenus (strain DSM 25203 / XCL-2) (Thiomicrospira crunogena), this protein is 3-isopropylmalate dehydrogenase.